A 477-amino-acid chain; its full sequence is Ribulose bisphosphate carboxylase large chain (477 aa).

Residues Met-1–Ser-2 constitute a propeptide that is removed on maturation. N-acetylproline is present on Pro-3. Lys-14 bears the N6,N6,N6-trimethyllysine mark. Substrate contacts are provided by Asn-123 and Thr-173. Catalysis depends on Lys-175, which acts as the Proton acceptor. Lys-177 is a binding site for substrate. Residues Lys-201, Asp-203, and Glu-204 each coordinate Mg(2+). Lys-201 is subject to N6-carboxylysine. Catalysis depends on His-294, which acts as the Proton acceptor. Residues Arg-295, His-327, and Ser-379 each contribute to the substrate site.

The protein belongs to the RuBisCO large chain family. Type I subfamily. In terms of assembly, heterohexadecamer of 8 large chains and 8 small chains; disulfide-linked. The disulfide link is formed within the large subunit homodimers. Mg(2+) is required as a cofactor. The disulfide bond which can form in the large chain dimeric partners within the hexadecamer appears to be associated with oxidative stress and protein turnover.

It is found in the plastid. The protein resides in the chloroplast. The catalysed reaction is 2 (2R)-3-phosphoglycerate + 2 H(+) = D-ribulose 1,5-bisphosphate + CO2 + H2O. The enzyme catalyses D-ribulose 1,5-bisphosphate + O2 = 2-phosphoglycolate + (2R)-3-phosphoglycerate + 2 H(+). Its function is as follows. RuBisCO catalyzes two reactions: the carboxylation of D-ribulose 1,5-bisphosphate, the primary event in carbon dioxide fixation, as well as the oxidative fragmentation of the pentose substrate in the photorespiration process. Both reactions occur simultaneously and in competition at the same active site. The protein is Ribulose bisphosphate carboxylase large chain of Agrostis stolonifera (Creeping bentgrass).